We begin with the raw amino-acid sequence, 393 residues long: Small ribosomal subunit protein bS1 (393 aa).

4 S1 motif domains span residues 16–90, 108–173, 194–262, and 279–348; these read GDKV…LSKR, NQTI…LSRK, and GDVI…LSIK. Positions 356-369 are enriched in polar residues; it reads VIESDSETTQSYLD. The disordered stretch occupies residues 356-381; the sequence is VIESDSETTQSYLDNGSDDEDNPTLG.

Belongs to the bacterial ribosomal protein bS1 family.

In terms of biological role, binds mRNA; thus facilitating recognition of the initiation point. It is needed to translate mRNA with a short Shine-Dalgarno (SD) purine-rich sequence. This is Small ribosomal subunit protein bS1 (rpsA) from Staphylococcus saprophyticus subsp. saprophyticus (strain ATCC 15305 / DSM 20229 / NCIMB 8711 / NCTC 7292 / S-41).